Reading from the N-terminus, the 491-residue chain is Glutamate--tRNA ligase (491 aa).

A 'HIGH' region motif is present at residues 13 to 23 (PSPTGFLHIGN). Residues Cys110, Cys112, Cys137, and His139 each coordinate Zn(2+). Residues 254–258 (KLSKR) carry the 'KMSKS' region motif. An ATP-binding site is contributed by Lys257.

It belongs to the class-I aminoacyl-tRNA synthetase family. Glutamate--tRNA ligase type 1 subfamily. As to quaternary structure, monomer. Zn(2+) is required as a cofactor.

Its subcellular location is the cytoplasm. The catalysed reaction is tRNA(Glu) + L-glutamate + ATP = L-glutamyl-tRNA(Glu) + AMP + diphosphate. Catalyzes the attachment of glutamate to tRNA(Glu) in a two-step reaction: glutamate is first activated by ATP to form Glu-AMP and then transferred to the acceptor end of tRNA(Glu). This is Glutamate--tRNA ligase from Listeria innocua serovar 6a (strain ATCC BAA-680 / CLIP 11262).